Reading from the N-terminus, the 391-residue chain is uncharacterized protein (391 aa).

Residues 118–149 (SINSLPPTTTTTTTTTTTTTIPNNNNNITLSP) are compositionally biased toward low complexity. 4 disordered regions span residues 118–162 (SINS…HQHP), 184–258 (QTNV…TPRN), 272–327 (NNNL…NNLN), and 337–356 (LNLNNNNNNNNNNNNNNNNN). Over residues 150-162 (QHHHGQQQHHQHP) the composition is skewed to basic residues. Positions 186 to 211 (NVNNNNNNNNNNNNNNNSNNNNNNNN) are enriched in low complexity. The segment covering 212–223 (DFSTPNSFSVPT) has biased composition (polar residues). Positions 244 to 256 (NTPNNSTSNPTTP) are enriched in low complexity.

This is an uncharacterized protein from Dictyostelium discoideum (Social amoeba).